The sequence spans 258 residues: Tryptophan synthase alpha chain (258 aa).

Catalysis depends on proton acceptor residues glutamate 47 and aspartate 58.

The protein belongs to the TrpA family. In terms of assembly, tetramer of two alpha and two beta chains.

It catalyses the reaction (1S,2R)-1-C-(indol-3-yl)glycerol 3-phosphate + L-serine = D-glyceraldehyde 3-phosphate + L-tryptophan + H2O. It participates in amino-acid biosynthesis; L-tryptophan biosynthesis; L-tryptophan from chorismate: step 5/5. Its function is as follows. The alpha subunit is responsible for the aldol cleavage of indoleglycerol phosphate to indole and glyceraldehyde 3-phosphate. This is Tryptophan synthase alpha chain from Bacillus cereus (strain AH820).